A 498-amino-acid polypeptide reads, in one-letter code: Phosphoethanolamine N-methyltransferase 1 (498 aa).

S-adenosyl-L-homocysteine contacts are provided by Gly68, Arg73, Asp89, Asp115, Val116, and Asn134. Residues Ser167, Ser172, Gly173, Arg177, and Tyr184 each coordinate phosphocholine. Residues Gln253–Tyr254 and Tyr262 contribute to the N-methylethanolamine phosphate site. Residue Tyr262 participates in phosphocholine binding. Residues Val271, Ser272, Gly298, Asp320, Asp346, Cys347, and Arg363 each coordinate S-adenosyl-L-homocysteine. Phosphocholine-binding residues include Tyr394, Tyr408, Arg412, Tyr414, and Lys480. Residues Tyr394, Tyr408, Arg412–Tyr414, and Lys480 each bind N-methylethanolamine phosphate.

It belongs to the class I-like SAM-binding methyltransferase superfamily. PEAMT family.

The catalysed reaction is phosphoethanolamine + S-adenosyl-L-methionine = N-methylethanolamine phosphate + S-adenosyl-L-homocysteine + H(+). It catalyses the reaction N-methylethanolamine phosphate + S-adenosyl-L-methionine = N,N-dimethylethanolamine phosphate + S-adenosyl-L-homocysteine + H(+). It carries out the reaction N,N-dimethylethanolamine phosphate + S-adenosyl-L-methionine = phosphocholine + S-adenosyl-L-homocysteine + H(+). The protein operates within phospholipid metabolism; phosphatidylcholine biosynthesis; phosphocholine from phosphoethanolamine: step 1/1. With respect to regulation, inhibited by phosphatidic acid. Functionally, involved in phosphocholine biosynthesis. Catalyzes the N-methylation of phosphoethanolamine, phosphomonomethylethanolamine and phosphodimethylethanolamine, the three methylation steps required to convert phosphoethanolamine to phosphocholine (PC). The polypeptide is Phosphoethanolamine N-methyltransferase 1 (Triticum aestivum (Wheat)).